Reading from the N-terminus, the 267-residue chain is Palmitoyltransferase ZDHHC12 (267 aa).

Topologically, residues 1–9 are cytoplasmic; sequence MAPWALLSP. A helical membrane pass occupies residues 10 to 30; that stretch reads GVLVRTGHTVLTWGITLVLFL. The Lumenal segment spans residues 31 to 43; sequence HDTELRQWEEQGE. The helical transmembrane segment at 44–64 threads the bilayer; that stretch reads LLLPLTFLLLVLGSLLLYLAV. Over 65-140 the chain is Cytoplasmic; the sequence is SLMDPGYVNV…ENCVGERNHP (76 aa). Positions 97–147 constitute a DHHC domain; sequence RRCRYCLVLQPLRARHCRECRRCVRRYDHHCPWMENCVGERNHPLFVVYLA. The active-site S-palmitoyl cysteine intermediate is cysteine 127. Residues 141–161 form a helical membrane-spanning segment; sequence LFVVYLALQLVVLLWGLYLAW. At 162 to 178 the chain is on the lumenal side; it reads SGLRFFQPWGQWLRSSG. The chain crosses the membrane as a helical span at residues 179 to 199; that stretch reads LLFATFLLLSLFSLVASLLLV. Over 200–267 the chain is Cytoplasmic; sequence SHLYLVASNT…EEEEGSSPAV (68 aa).

The protein belongs to the DHHC palmitoyltransferase family. As to expression, widely expressed.

It localises to the golgi apparatus membrane. It is found in the endoplasmic reticulum membrane. The enzyme catalyses L-cysteinyl-[protein] + hexadecanoyl-CoA = S-hexadecanoyl-L-cysteinyl-[protein] + CoA. In terms of biological role, palmitoyltransferase that catalyzes the addition of palmitate onto various protein substrates. Has a palmitoyltransferase activity toward gephyrin/GPHN, regulating its clustering at synapses and its function in gamma-aminobutyric acid receptor clustering. Thereby, indirectly regulates GABAergic synaptic transmission. Negatively regulates NLRP3-driven inflammation. Catalyzes NLRP3 palmitoylation, leading to its degradation via the chaperone-mediated autophagy (CMA) process. This is Palmitoyltransferase ZDHHC12 from Homo sapiens (Human).